A 186-amino-acid chain; its full sequence is Heat shock protein 23 (186 aa).

The region spanning 53-161 (VGASSGSSGA…KGNERIVQIQ (109 aa)) is the sHSP domain. Residues 163–186 (VGPAHLNVKENPKEAVEQDNGNDK) form a disordered region. Residues 169–186 (NVKENPKEAVEQDNGNDK) show a composition bias toward basic and acidic residues.

This sequence belongs to the small heat shock protein (HSP20) family.

The sequence is that of Heat shock protein 23 (Hsp23) from Drosophila melanogaster (Fruit fly).